The following is a 607-amino-acid chain: Guanine nucleotide-binding protein-like 1 (607 aa).

Over residues 1–14 (MPRKKPFSVKQKKK) the composition is skewed to basic residues. The segment at 1–81 (MPRKKPFSVK…GPRGYDPNRY (81 aa)) is disordered. Residues 15-26 (QLQDKRERKRGL) are compositionally biased toward basic and acidic residues. 3 positions are modified to phosphoserine: Ser-32, Ser-33, and Ser-34. Phosphothreonine is present on residues Thr-48 and Thr-50. 2 positions are modified to phosphoserine: Ser-51 and Ser-68. The 241-residue stretch at 178–418 (WRQLWRVLEM…LCDCPGLIFP (241 aa)) folds into the CP-type G domain. 225–228 (NKVD) contacts GTP. Ser-324 bears the Phosphoserine mark. Residues 367–374 (GFPNVGKS) and 411–415 (DCPGL) contribute to the GTP site. Positions 547-607 (GPAGDEEEEE…PYALLGEDEC (61 aa)) are disordered. Acidic residues predominate over residues 550–584 (GDEEEEEEEELSSSCEEEGEEDRDADEEGEGDEDT). A phosphoserine mark is found at Ser-561, Ser-562, and Ser-563.

It belongs to the TRAFAC class YlqF/YawG GTPase family.

Its function is as follows. Possible regulatory or functional link with the histocompatibility cluster. In Macaca fascicularis (Crab-eating macaque), this protein is Guanine nucleotide-binding protein-like 1 (GNL1).